A 154-amino-acid chain; its full sequence is Superoxide dismutase [Cu-Zn] (154 aa).

3 residues coordinate Cu cation: histidine 47, histidine 49, and histidine 64. Cysteine 58 and cysteine 147 are oxidised to a cystine. 4 residues coordinate Zn(2+): histidine 64, histidine 72, histidine 81, and aspartate 84. Residue histidine 121 participates in Cu cation binding. Arginine 144 contributes to the substrate binding site.

The protein belongs to the Cu-Zn superoxide dismutase family. In terms of assembly, homodimer. The cofactor is Cu cation. Requires Zn(2+) as cofactor.

The protein localises to the cytoplasm. It is found in the mitochondrion. Its subcellular location is the cell membrane. It carries out the reaction 2 superoxide + 2 H(+) = H2O2 + O2. Its function is as follows. Destroys radicals which are normally produced within the cells and which are toxic to biological systems. Destroys radicals produced by host defense mechanisms. This Cryptococcus neoformans var. grubii serotype A (strain H99 / ATCC 208821 / CBS 10515 / FGSC 9487) (Filobasidiella neoformans var. grubii) protein is Superoxide dismutase [Cu-Zn].